The primary structure comprises 566 residues: Proline--tRNA ligase (566 aa).

This sequence belongs to the class-II aminoacyl-tRNA synthetase family. ProS type 1 subfamily. As to quaternary structure, homodimer.

It is found in the cytoplasm. The catalysed reaction is tRNA(Pro) + L-proline + ATP = L-prolyl-tRNA(Pro) + AMP + diphosphate. Catalyzes the attachment of proline to tRNA(Pro) in a two-step reaction: proline is first activated by ATP to form Pro-AMP and then transferred to the acceptor end of tRNA(Pro). As ProRS can inadvertently accommodate and process non-cognate amino acids such as alanine and cysteine, to avoid such errors it has two additional distinct editing activities against alanine. One activity is designated as 'pretransfer' editing and involves the tRNA(Pro)-independent hydrolysis of activated Ala-AMP. The other activity is designated 'posttransfer' editing and involves deacylation of mischarged Ala-tRNA(Pro). The misacylated Cys-tRNA(Pro) is not edited by ProRS. This Bacillus anthracis (strain A0248) protein is Proline--tRNA ligase.